The primary structure comprises 84 residues: Protein SlyX homolog (84 aa).

This sequence belongs to the SlyX family.

This chain is Protein SlyX homolog, found in Mannheimia succiniciproducens (strain KCTC 0769BP / MBEL55E).